Reading from the N-terminus, the 81-residue chain is Photosystem I iron-sulfur center (81 aa).

4Fe-4S ferredoxin-type domains lie at 2–31 (SHAV…MVPW) and 39–68 (IASA…VRVY). [4Fe-4S] cluster is bound by residues cysteine 11, cysteine 14, cysteine 17, cysteine 21, cysteine 48, cysteine 51, cysteine 54, and cysteine 58.

In terms of assembly, the eukaryotic PSI reaction center is composed of at least 11 subunits. It depends on [4Fe-4S] cluster as a cofactor.

The protein localises to the plastid. It is found in the chloroplast thylakoid membrane. It catalyses the reaction reduced [plastocyanin] + hnu + oxidized [2Fe-2S]-[ferredoxin] = oxidized [plastocyanin] + reduced [2Fe-2S]-[ferredoxin]. Functionally, apoprotein for the two 4Fe-4S centers FA and FB of photosystem I (PSI); essential for photochemical activity. FB is the terminal electron acceptor of PSI, donating electrons to ferredoxin. The C-terminus interacts with PsaA/B/D and helps assemble the protein into the PSI complex. Required for binding of PsaD and PsaE to PSI. PSI is a plastocyanin/cytochrome c6-ferredoxin oxidoreductase, converting photonic excitation into a charge separation, which transfers an electron from the donor P700 chlorophyll pair to the spectroscopically characterized acceptors A0, A1, FX, FA and FB in turn. The chain is Photosystem I iron-sulfur center from Ostreococcus tauri.